The primary structure comprises 205 residues: Thiamine-phosphate synthase (205 aa).

4-amino-2-methyl-5-(diphosphooxymethyl)pyrimidine contacts are provided by residues 34–38 and Asn66; that span reads QLRCK. Residues Asp67 and Asp86 each contribute to the Mg(2+) site. Ser105 contributes to the 4-amino-2-methyl-5-(diphosphooxymethyl)pyrimidine binding site. 131-133 lines the 2-[(2R,5Z)-2-carboxy-4-methylthiazol-5(2H)-ylidene]ethyl phosphate pocket; it reads TTT. A 4-amino-2-methyl-5-(diphosphooxymethyl)pyrimidine-binding site is contributed by Lys134. Gly163 is a binding site for 2-[(2R,5Z)-2-carboxy-4-methylthiazol-5(2H)-ylidene]ethyl phosphate.

It belongs to the thiamine-phosphate synthase family. It depends on Mg(2+) as a cofactor.

The catalysed reaction is 2-[(2R,5Z)-2-carboxy-4-methylthiazol-5(2H)-ylidene]ethyl phosphate + 4-amino-2-methyl-5-(diphosphooxymethyl)pyrimidine + 2 H(+) = thiamine phosphate + CO2 + diphosphate. The enzyme catalyses 2-(2-carboxy-4-methylthiazol-5-yl)ethyl phosphate + 4-amino-2-methyl-5-(diphosphooxymethyl)pyrimidine + 2 H(+) = thiamine phosphate + CO2 + diphosphate. It carries out the reaction 4-methyl-5-(2-phosphooxyethyl)-thiazole + 4-amino-2-methyl-5-(diphosphooxymethyl)pyrimidine + H(+) = thiamine phosphate + diphosphate. It participates in cofactor biosynthesis; thiamine diphosphate biosynthesis; thiamine phosphate from 4-amino-2-methyl-5-diphosphomethylpyrimidine and 4-methyl-5-(2-phosphoethyl)-thiazole: step 1/1. Condenses 4-methyl-5-(beta-hydroxyethyl)thiazole monophosphate (THZ-P) and 2-methyl-4-amino-5-hydroxymethyl pyrimidine pyrophosphate (HMP-PP) to form thiamine monophosphate (TMP). This is Thiamine-phosphate synthase from Neisseria meningitidis serogroup A / serotype 4A (strain DSM 15465 / Z2491).